The sequence spans 143 residues: Hemoglobin subunit alpha (143 aa).

S1 is modified (N-acetylserine). The Globin domain maps to 1–143; sequence SLSATDKARV…LALALSEKYR (143 aa). An O2-binding site is contributed by H60. H89 is a heme b binding site.

It belongs to the globin family. As to quaternary structure, heterotetramer of two alpha chains and two beta chains. Red blood cells.

Functionally, involved in oxygen transport from gills to the various peripheral tissues. The protein is Hemoglobin subunit alpha (hba) of Leiostomus xanthurus (Spot).